Here is an 83-residue protein sequence, read N- to C-terminus: MGLGGISIWQLLIVLVIVLLLFGTKRLKGLGGDLGGAIKGFKKAMSDDEAAKQEAEEAEQKKVAAEEAAAAKTAEQKEKTEAK.

The helical transmembrane segment at 2–22 (GLGGISIWQLLIVLVIVLLLF) threads the bilayer. 2 stretches are compositionally biased toward basic and acidic residues: residues 50–65 (AAKQ…KVAA) and 74–83 (AEQKEKTEAK). The disordered stretch occupies residues 50–83 (AAKQEAEEAEQKKVAAEEAAAAKTAEQKEKTEAK).

It belongs to the TatA/E family. In terms of assembly, the Tat system comprises two distinct complexes: a TatABC complex, containing multiple copies of TatA, TatB and TatC subunits, and a separate TatA complex, containing only TatA subunits. Substrates initially bind to the TatABC complex, which probably triggers association of the separate TatA complex to form the active translocon.

The protein localises to the cell inner membrane. In terms of biological role, part of the twin-arginine translocation (Tat) system that transports large folded proteins containing a characteristic twin-arginine motif in their signal peptide across membranes. TatA could form the protein-conducting channel of the Tat system. This Saccharophagus degradans (strain 2-40 / ATCC 43961 / DSM 17024) protein is Sec-independent protein translocase protein TatA.